The primary structure comprises 289 residues: Splicing factor C9orf78 homolog (289 aa).

A compositionally biased stretch (basic residues) spans M1 to R12. Disordered regions lie at residues M1–V27 and G86–R109. The tract at residues R5 to V58 is interaction with SNRNP200. Residues S15 and S17 each carry the phosphoserine modification. The residue at position 147 (Y147) is a Phosphotyrosine. Residues L232–K283 show a composition bias toward basic and acidic residues. The tract at residues L232–Y289 is disordered. T253 bears the Phosphothreonine mark. Residue S261 is modified to Phosphoserine.

This sequence belongs to the TLS1 family. Component of the spliceosome. Interacts with SNRNP200; the interaction is direct. Interacts with PRPF8.

It is found in the nucleus. The protein localises to the chromosome. The protein resides in the centromere. Plays a role in pre-mRNA splicing by promoting usage of the upstream 3'-splice site at alternative NAGNAG splice sites; these are sites featuring alternative acceptor motifs separated by only a few nucleotides. May also modulate exon inclusion events. Plays a role in spliceosomal remodeling by displacing WBP4 from SNRNP200 and may act to inhibit SNRNP200 helicase activity. Binds U5 snRNA. Required for proper chromosome segregation. Not required for splicing of shelterin components. This is Splicing factor C9orf78 homolog from Pongo abelii (Sumatran orangutan).